A 602-amino-acid polypeptide reads, in one-letter code: Toxin YwqJ (602 aa).

The LXG domain occupies 1–235; sequence MSKVFESKSL…TTYIDAKTQQ (235 aa). Coiled-coil stretches lie at residues 6–41 and 227–251; these read ESKS…VADL and TYID…EANK.

The protein in the N-terminal section; belongs to the LXG family. As to quaternary structure, probably interacts with cognate immunity protein YwqK but not with non-cognate immunity proteins. The interaction inhibits the toxic activity of YwqJ.

The protein resides in the secreted. Functionally, toxic component of one of 6 LXG toxin-immunity modules in this strain. They promote kin selection, mediate competition in biofilms, and drive spatial segregation of different strains, indicating that LXG toxins may help avoid warfare between strains in biofilms. Mediates intercellular competition during biofilm formation; disruption of the operon disadvantages the bacteria, but overexpression of the cognate immunity protein restores growth in competition with wild-type. Overexpression alone in situ causes growth arrest but not cell lysis; no effect is seen on DNA or rRNA. Co-overexpression with cognate immunity protein YwqK does not cause growth arrest. The toxic effect is dependent on the epsA and tapA operons which are required for biofilm formation. Its toxic effects are probably neutralized by its cognate immunity protein YwqK, but not by immunity proteins specific to other toxins with the LXG domain. May have deaminase activity. This is Toxin YwqJ (ywqJ) from Bacillus subtilis (strain 168).